The primary structure comprises 65 residues: Large ribosomal subunit protein uL29 (65 aa).

This sequence belongs to the universal ribosomal protein uL29 family.

The chain is Large ribosomal subunit protein uL29 from Dehalococcoides mccartyi (strain ATCC BAA-2266 / KCTC 15142 / 195) (Dehalococcoides ethenogenes (strain 195)).